A 90-amino-acid polypeptide reads, in one-letter code: Large ribosomal subunit protein bL27 (90 aa).

Residues 1 to 21 (MAHKKAGGSSRNGRDSHGKRL) are disordered.

It belongs to the bacterial ribosomal protein bL27 family.

This Nitrobacter winogradskyi (strain ATCC 25391 / DSM 10237 / CIP 104748 / NCIMB 11846 / Nb-255) protein is Large ribosomal subunit protein bL27.